A 202-amino-acid chain; its full sequence is Imidazoleglycerol-phosphate dehydratase (202 aa).

The protein belongs to the imidazoleglycerol-phosphate dehydratase family.

The protein resides in the cytoplasm. It catalyses the reaction D-erythro-1-(imidazol-4-yl)glycerol 3-phosphate = 3-(imidazol-4-yl)-2-oxopropyl phosphate + H2O. The protein operates within amino-acid biosynthesis; L-histidine biosynthesis; L-histidine from 5-phospho-alpha-D-ribose 1-diphosphate: step 6/9. This Synechococcus sp. (strain CC9605) protein is Imidazoleglycerol-phosphate dehydratase.